We begin with the raw amino-acid sequence, 1046 residues long: SWI/SNF-related matrix-associated actin-dependent regulator of chromatin subfamily A member 1 (1046 aa).

The tract at residues 27 to 61 (EQPGPSTFKEEGAAAAATEGTTATEKGEKKEKITS) is disordered. Residues 39–50 (AAAAATEGTTAT) are compositionally biased toward low complexity. 2 positions are modified to phosphoserine: serine 120 and serine 123. Residues 199-364 (ISLYENGVNG…WALLNFLLPD (166 aa)) enclose the Helicase ATP-binding domain. 212 to 219 (DEMGLGKT) provides a ligand contact to ATP. The DEAH box motif lies at 315-318 (DEAH). The Helicase C-terminal domain occupies 494 to 645 (ALDKLLARIK…SIVIQQGRLI (152 aa)). Residues lysine 654, lysine 720, and lysine 742 each participate in a glycyl lysine isopeptide (Lys-Gly) (interchain with G-Cter in SUMO2) cross-link. The interval 819-840 (AQREEQKKIDGAEPLTPQETEE) is disordered. Over residues 820-829 (QREEQKKIDG) the composition is skewed to basic and acidic residues. Residues 847–899 (QGFTNWTKRDFNQFIKANEKYGRDDIDNIAREVEGKSPEEVMEYSAVFWERCN) enclose the SANT 1 domain. Position 946 is a phosphotyrosine (tyrosine 946). In terms of domain architecture, SANT 2 spans 950 to 1014 (KGKNYTEEED…QRRCNTLISL (65 aa)). Residues 1003–1037 (EFQRRCNTLISLIEKENMEIEERERAEKKKRATKT) adopt a coiled-coil conformation. Residues 1025-1046 (RERAEKKKRATKTPMVKFSAFS) form a disordered region.

The protein belongs to the SNF2/RAD54 helicase family. ISWI subfamily. As to quaternary structure, may form homodimers. Component of the ACF-1 ISWI chromatin remodeling complex at least composed of SMARCA1 and BAZ1A, which regulates the spacing of histone octamers on the DNA template to facilitate access to DNA. Within the complex interacts with BAZ1A; the interaction is direct. Component of the WICH-1 ISWI chromatin remodeling complex at least composed of SMARCA1 and BAZ1B/WSTF. Within the complex interacts with BAZ1B/WSTF. Component of the NoRC-1 ISWI chromatin remodeling complex at least composed of SMARCA1 and BAZ2A/TIP5. Within the complex interacts with BAZ2A/TIP5. Component of the BRF-1 ISWI chromatin remodeling complex at least composed of SMARCA1 and BAZ2B. Within the complex interacts with BAZ2B. Component of the NURF-1 ISWI chromatin remodeling complex (also called the nucleosome-remodeling factor (NURF) complex) at least composed of SMARCA1, BPTF, RBBP4 and RBBP7. Within the complex interacts with BPTF. Within the complex interacts with RBBP4 and RBBP7. Component of the CERF-1 ISWI chromatin remodeling complex (also called the CECR2-containing-remodeling factor (CERF) complex) at least composed of CECR2 and SMARCA1. LUZP1 is detected as part of the CERF-1 complex in embryonic stem cells where it is involved in complex stabilization but is not detected in the complex in the testis. Component of the RSF-1 ISWI chromatin remodeling complex at least composed of SMARCA1 and RSF1. Within the complex interacts with RSF1. Interacts with PRLR. Interacts with ERCC6. In terms of tissue distribution, predominantly expressed in cortex, cerebellum, ovaries, testes, uterus and placenta.

It localises to the nucleus. It catalyses the reaction ATP + H2O = ADP + phosphate + H(+). In terms of biological role, ATPase that possesses intrinsic ATP-dependent chromatin-remodeling activity. ATPase activity is substrate-dependent, and is increased when nucleosomes are the substrate, but is also catalytically active when DNA alone is the substrate. Catalytic subunit of ISWI chromatin-remodeling complexes, which form ordered nucleosome arrays on chromatin and facilitate access to DNA during DNA-templated processes such as DNA replication, transcription, and repair. Within the ISWI chromatin-remodeling complexes, slides edge- and center-positioned histone octamers away from their original location on the DNA template. Catalytic activity and histone octamer sliding propensity is regulated and determined by components of the ISWI chromatin-remodeling complexes. The BAZ1A-, BAZ1B-, BAZ2A- and BAZ2B-containing ISWI chromatin-remodeling complexes regulate the spacing of nucleosomes along the chromatin and have the ability to slide mononucleosomes to the center of a DNA template. The CECR2- and RSF1-containing ISWI chromatin-remodeling complexes do not have the ability to slide mononucleosomes to the center of a DNA template. Within the NURF-1 and CERF-1 ISWI chromatin remodeling complexes, nucleosomes are the preferred substrate for its ATPase activity. Within the NURF-1 ISWI chromatin-remodeling complex, binds to the promoters of En1 and En2 to positively regulate their expression and promote brain development. May promote neurite outgrowth. May be involved in the development of luteal cells. Facilitates nucleosome assembly during DNA replication, ensuring replication fork progression and genomic stability by preventing replication stress and nascent DNA gaps. The protein is SWI/SNF-related matrix-associated actin-dependent regulator of chromatin subfamily A member 1 (Smarca1) of Mus musculus (Mouse).